Consider the following 268-residue polypeptide: Mediator of RNA polymerase II transcription subunit 8-A (268 aa).

Coiled coils occupy residues Met-1–Leu-26 and Val-117–Glu-160. Positions Gly-190–Arg-268 are disordered. Polar residues predominate over residues Val-223 to Gln-246.

The protein belongs to the Mediator complex subunit 8 family. In terms of assembly, component of the Mediator complex. May be part of a multisubunit E3 ubiquitin-protein ligase complex.

It is found in the nucleus. The protein operates within protein modification; protein ubiquitination. Component of the Mediator complex, a coactivator involved in the regulated transcription of nearly all RNA polymerase II-dependent genes. Mediator functions as a bridge to convey information from gene-specific regulatory proteins to the basal RNA polymerase II transcription machinery. Mediator is recruited to promoters by direct interactions with regulatory proteins and serves as a scaffold for the assembly of a functional preinitiation complex with RNA polymerase II and the general transcription factors. May play a role as a target recruitment subunit in E3 ubiquitin-protein ligase complexes and thus in ubiquitination and subsequent proteasomal degradation of target proteins. The protein is Mediator of RNA polymerase II transcription subunit 8-A (med8-a) of Xenopus laevis (African clawed frog).